The chain runs to 377 residues: MSDTPTLALAKDLLSRQSITPEDAGCQELMIKQLEALGFTIEIMVFEDTTNFWARRGNKAPLFTFAGHTDVVPTGDLTHWNTNPFEPTIIDGMLYARGAADMKGSLACMVVAVERFVAEHPNHKGSISFLITSDEEGPFINGTTRVVDTLQERNEIIDMCIVGEPSSTAHVGDVVKNGRRGSLTGNLTVKGIQGHVAYPHIARNPIHQAMPALSELATTVWDNGNDYFPPTSFQIPNMNGGTGASNVIPGTVDIMFNFRFSTESTVDELQQRVVEILDKHDLEYELDWIINGLPFLTDTGDLLTAVVNAVDTVNQQKPQLLTTGGTSDGRFIAQMGSQVIELGPVNATIHKVNECVNVEDLEKLTDMYQEVLNNLLA.

Position 68 (His68) interacts with Zn(2+). Asp70 is an active-site residue. Asp101 lines the Zn(2+) pocket. Glu135 functions as the Proton acceptor in the catalytic mechanism. The Zn(2+) site is built by Glu136, Glu164, and His350.

Belongs to the peptidase M20A family. DapE subfamily. Homodimer. It depends on Zn(2+) as a cofactor. The cofactor is Co(2+).

The catalysed reaction is N-succinyl-(2S,6S)-2,6-diaminopimelate + H2O = (2S,6S)-2,6-diaminopimelate + succinate. It functions in the pathway amino-acid biosynthesis; L-lysine biosynthesis via DAP pathway; LL-2,6-diaminopimelate from (S)-tetrahydrodipicolinate (succinylase route): step 3/3. Functionally, catalyzes the hydrolysis of N-succinyl-L,L-diaminopimelic acid (SDAP), forming succinate and LL-2,6-diaminopimelate (DAP), an intermediate involved in the bacterial biosynthesis of lysine and meso-diaminopimelic acid, an essential component of bacterial cell walls. This is Succinyl-diaminopimelate desuccinylase from Aliivibrio fischeri (strain ATCC 700601 / ES114) (Vibrio fischeri).